Reading from the N-terminus, the 421-residue chain is Tyrosine--tRNA ligase (421 aa).

Tyrosine 42 contributes to the L-tyrosine binding site. The 'HIGH' region motif lies at 47–56 (CTAPSLHVGS). L-tyrosine-binding residues include tyrosine 179 and glutamine 183. A 'KMSKS' region motif is present at residues 239 to 243 (KMGKT). Lysine 242 contacts ATP. Positions 354-419 (LGILAAFAKA…RKKHVLLRLA (66 aa)) constitute an S4 RNA-binding domain.

It belongs to the class-I aminoacyl-tRNA synthetase family. TyrS type 1 subfamily. As to quaternary structure, homodimer.

It localises to the cytoplasm. The catalysed reaction is tRNA(Tyr) + L-tyrosine + ATP = L-tyrosyl-tRNA(Tyr) + AMP + diphosphate + H(+). In terms of biological role, catalyzes the attachment of tyrosine to tRNA(Tyr) in a two-step reaction: tyrosine is first activated by ATP to form Tyr-AMP and then transferred to the acceptor end of tRNA(Tyr). This Beijerinckia indica subsp. indica (strain ATCC 9039 / DSM 1715 / NCIMB 8712) protein is Tyrosine--tRNA ligase.